The primary structure comprises 1346 residues: G-protein coupled receptor-associated sorting protein 1 (1346 aa).

Disordered regions lie at residues 1–101, 144–177, and 192–258; these read MTGA…FRGE, TESIPKKASSPARFQPSFGPEEGTSMGSWYRPRP, and ADKS…SAKT. The segment covering 21-36 has biased composition (low complexity); the sequence is ENANAAEVEPEVPLVV. The span at 211–226 shows a compositional bias: basic residues; it reads FRPRKSMKSNTRFRHM. S295 carries the post-translational modification Phosphoserine. Disordered stretches follow at residues 311 to 399 and 461 to 485; these read EEAK…RPEE and VSSFCLGSGKKTSMESGPKATSKSM. Residues 316-333 show a composition bias toward basic residues; the sequence is RSKPRARKGVNMRARHQA. Composition is skewed to basic and acidic residues over residues 347-361 and 370-399; these read DKNKKDSWFLPEEKA and KKEPRTRAMPREEVKTKARASTKQEARPEE. The span at 461–484 shows a compositional bias: polar residues; that stretch reads VSSFCLGSGKKTSMESGPKATSKS. S619 and S626 each carry phosphoserine. At T860 the chain carries Phosphothreonine. At S862 the chain carries Phosphoserine. Residues 984 to 1004 are disordered; it reads ACEPESSTEHEPDPSRRPQSW. A compositionally biased stretch (basic and acidic residues) spans 990–1003; the sequence is STEHEPDPSRRPQS.

The protein belongs to the GPRASP family. In terms of assembly, interacts with cytoplasmic tails of a variety of G-protein coupled receptors such as delta opioid receptor/OPRD1, beta-2 adrenergic receptor/ADRB2 and D4 dopamine receptor/DRD4. Interacts with BECN2; the interaction is direct and with D2 dopamine receptor/DRD2. Interacts with PER1. As to expression, expressed in the brain.

The protein localises to the cytoplasm. Functionally, modulates lysosomal sorting and functional down-regulation of a variety of G-protein coupled receptors. Targets receptors for degradation in lysosomes via its interaction with BECN2. This chain is G-protein coupled receptor-associated sorting protein 1 (Gprasp1), found in Rattus norvegicus (Rat).